The following is a 447-amino-acid chain: Ribulose bisphosphate carboxylase large chain (447 aa).

2 residues coordinate substrate: N89 and T139. K141 functions as the Proton acceptor in the catalytic mechanism. K143 is a binding site for substrate. K167, D169, and E170 together coordinate Mg(2+). K167 is subject to N6-carboxylysine. The active-site Proton acceptor is H260. Substrate contacts are provided by R261, H293, and S345.

This sequence belongs to the RuBisCO large chain family. Type I subfamily. Heterohexadecamer of 8 large chains and 8 small chains; disulfide-linked. The disulfide link is formed within the large subunit homodimers. Mg(2+) serves as cofactor. The disulfide bond which can form in the large chain dimeric partners within the hexadecamer appears to be associated with oxidative stress and protein turnover.

Its subcellular location is the plastid. The protein localises to the chloroplast. The catalysed reaction is 2 (2R)-3-phosphoglycerate + 2 H(+) = D-ribulose 1,5-bisphosphate + CO2 + H2O. The enzyme catalyses D-ribulose 1,5-bisphosphate + O2 = 2-phosphoglycolate + (2R)-3-phosphoglycerate + 2 H(+). Functionally, ruBisCO catalyzes two reactions: the carboxylation of D-ribulose 1,5-bisphosphate, the primary event in carbon dioxide fixation, as well as the oxidative fragmentation of the pentose substrate in the photorespiration process. Both reactions occur simultaneously and in competition at the same active site. The protein is Ribulose bisphosphate carboxylase large chain of Convolvulus tricolor (Dwarf morning glory).